Consider the following 219-residue polypeptide: Thiamine-phosphate synthase (219 aa).

Residues 45-49 (QYREK) and Asn-77 contribute to the 4-amino-2-methyl-5-(diphosphooxymethyl)pyrimidine site. Mg(2+) is bound by residues Asp-78 and Asp-97. Thr-116 is a binding site for 4-amino-2-methyl-5-(diphosphooxymethyl)pyrimidine. Position 142–144 (142–144 (SFT)) interacts with 2-[(2R,5Z)-2-carboxy-4-methylthiazol-5(2H)-ylidene]ethyl phosphate. Lys-145 is a 4-amino-2-methyl-5-(diphosphooxymethyl)pyrimidine binding site. 2-[(2R,5Z)-2-carboxy-4-methylthiazol-5(2H)-ylidene]ethyl phosphate-binding positions include Gly-173 and 193 to 194 (VT).

Belongs to the thiamine-phosphate synthase family. The cofactor is Mg(2+).

It carries out the reaction 2-[(2R,5Z)-2-carboxy-4-methylthiazol-5(2H)-ylidene]ethyl phosphate + 4-amino-2-methyl-5-(diphosphooxymethyl)pyrimidine + 2 H(+) = thiamine phosphate + CO2 + diphosphate. It catalyses the reaction 2-(2-carboxy-4-methylthiazol-5-yl)ethyl phosphate + 4-amino-2-methyl-5-(diphosphooxymethyl)pyrimidine + 2 H(+) = thiamine phosphate + CO2 + diphosphate. The catalysed reaction is 4-methyl-5-(2-phosphooxyethyl)-thiazole + 4-amino-2-methyl-5-(diphosphooxymethyl)pyrimidine + H(+) = thiamine phosphate + diphosphate. It participates in cofactor biosynthesis; thiamine diphosphate biosynthesis; thiamine phosphate from 4-amino-2-methyl-5-diphosphomethylpyrimidine and 4-methyl-5-(2-phosphoethyl)-thiazole: step 1/1. Condenses 4-methyl-5-(beta-hydroxyethyl)thiazole monophosphate (THZ-P) and 2-methyl-4-amino-5-hydroxymethyl pyrimidine pyrophosphate (HMP-PP) to form thiamine monophosphate (TMP). In Caldicellulosiruptor bescii (strain ATCC BAA-1888 / DSM 6725 / KCTC 15123 / Z-1320) (Anaerocellum thermophilum), this protein is Thiamine-phosphate synthase.